Consider the following 140-residue polypeptide: Protein ripply1 (140 aa).

The WRPW motif; required for gro2-binding signature appears at 28 to 31; it reads WRPW. The tract at residues 71–106 is ripply homology domain; the sequence is HPVRLYWPRSKSFDYLFSDGEALLRNFPVQATINFY. The tract at residues 107–126 is disordered; it reads DESDSEDEEESCDEDDESDV.

The protein belongs to the ripply family. As to quaternary structure, interacts with gro2 via the WRPW motif. As to expression, expressed in the embryonic anterior presomitic mesoderm and in newly formed somites.

The protein localises to the nucleus. Functionally, plays a role in somitogenesis. Essential for transcriptional repression of the segmental patterning genes, thus terminating the segmentation program in the presomitic mesoderm, and also required for the maintenance of rostrocaudal polarity in somites. In Danio rerio (Zebrafish), this protein is Protein ripply1.